Reading from the N-terminus, the 151-residue chain is UPF0208 membrane protein YfbV (151 aa).

The Cytoplasmic segment spans residues 1 to 45 (MSTPDNRSVNFFSLFRRGQHYAKTWPMEKRLAPVFVENRVIRMTR). Residues 46 to 65 (YAIRFMPPVAVFTLCWQIAL) traverse the membrane as a helical segment. Residues 66–68 (GGQ) are Periplasmic-facing. The helical transmembrane segment at 69–91 (LGPAVATALFALSLPMQGLWWLG) threads the bilayer. The Cytoplasmic portion of the chain corresponds to 92 to 151 (KRSLTPLPPSILNWFYEVRGKLQEAGQALAPVEGKPDYQALADTLKRAFKQLDKTFLDDL).

It belongs to the UPF0208 family.

It localises to the cell inner membrane. The protein is UPF0208 membrane protein YfbV (yfbV) of Salmonella typhi.